Reading from the N-terminus, the 799-residue chain is Phenylalanine--tRNA ligase beta subunit (799 aa).

The region spanning 39-150 (GKGFSGVIVG…EHLQAGTALN (112 aa)) is the tRNA-binding domain. In terms of domain architecture, B5 spans 402 to 478 (FLELTIRCRL…RIYGYDHIPR (77 aa)). Residues Asp-456, Asp-462, Glu-465, and Glu-466 each coordinate Mg(2+). In terms of domain architecture, FDX-ACB spans 705–798 (AIYPGSERDW…VSQKFANDLK (94 aa)).

This sequence belongs to the phenylalanyl-tRNA synthetase beta subunit family. Type 1 subfamily. As to quaternary structure, tetramer of two alpha and two beta subunits. Requires Mg(2+) as cofactor.

Its subcellular location is the cytoplasm. It carries out the reaction tRNA(Phe) + L-phenylalanine + ATP = L-phenylalanyl-tRNA(Phe) + AMP + diphosphate + H(+). This Protochlamydia amoebophila (strain UWE25) protein is Phenylalanine--tRNA ligase beta subunit.